The chain runs to 194 residues: ATP synthase subunit b 1 (194 aa).

A helical transmembrane segment spans residues 1-21 (MLLGTVVTVLSTLPAIAYAMD).

It belongs to the ATPase B chain family. In terms of assembly, F-type ATPases have 2 components, F(1) - the catalytic core - and F(0) - the membrane proton channel. F(1) has five subunits: alpha(3), beta(3), gamma(1), delta(1), epsilon(1). F(0) has three main subunits: a(1), b(2) and c(10-14). The alpha and beta chains form an alternating ring which encloses part of the gamma chain. F(1) is attached to F(0) by a central stalk formed by the gamma and epsilon chains, while a peripheral stalk is formed by the delta and b chains.

It localises to the cell inner membrane. In terms of biological role, f(1)F(0) ATP synthase produces ATP from ADP in the presence of a proton or sodium gradient. F-type ATPases consist of two structural domains, F(1) containing the extramembraneous catalytic core and F(0) containing the membrane proton channel, linked together by a central stalk and a peripheral stalk. During catalysis, ATP synthesis in the catalytic domain of F(1) is coupled via a rotary mechanism of the central stalk subunits to proton translocation. Its function is as follows. Component of the F(0) channel, it forms part of the peripheral stalk, linking F(1) to F(0). The polypeptide is ATP synthase subunit b 1 (Granulibacter bethesdensis (strain ATCC BAA-1260 / CGDNIH1)).